Reading from the N-terminus, the 169-residue chain is MPLLDSFTVDHTIMNAPAVRIAKTMQTPSKDTITVFDLRFTVPNEDLLSEKGIHTLEHLYAGFMRNHLNSPDVEIIDISPMGCRTGFYMSLIGSPSETEVANAWLAAMRDVLAVEHQEEIPELNKYQCGTYAMHSLAEAKTIAQAVIDAGVGTNKNADITLSDEQLKQL.

Positions 54, 58, and 128 each coordinate Fe cation.

This sequence belongs to the LuxS family. Homodimer. Fe cation is required as a cofactor.

It carries out the reaction S-(5-deoxy-D-ribos-5-yl)-L-homocysteine = (S)-4,5-dihydroxypentane-2,3-dione + L-homocysteine. In terms of biological role, involved in the synthesis of autoinducer 2 (AI-2) which is secreted by bacteria and is used to communicate both the cell density and the metabolic potential of the environment. The regulation of gene expression in response to changes in cell density is called quorum sensing. Catalyzes the transformation of S-ribosylhomocysteine (RHC) to homocysteine (HC) and 4,5-dihydroxy-2,3-pentadione (DPD). The polypeptide is S-ribosylhomocysteine lyase (Psychromonas ingrahamii (strain DSM 17664 / CCUG 51855 / 37)).